Reading from the N-terminus, the 203-residue chain is Large ribosomal subunit protein bL25 (203 aa).

This sequence belongs to the bacterial ribosomal protein bL25 family. CTC subfamily. Part of the 50S ribosomal subunit; part of the 5S rRNA/L5/L18/L25 subcomplex. Contacts the 5S rRNA. Binds to the 5S rRNA independently of L5 and L18.

This is one of the proteins that binds to the 5S RNA in the ribosome where it forms part of the central protuberance. In Cupriavidus pinatubonensis (strain JMP 134 / LMG 1197) (Cupriavidus necator (strain JMP 134)), this protein is Large ribosomal subunit protein bL25.